We begin with the raw amino-acid sequence, 449 residues long: GTPase Der (449 aa).

EngA-type G domains lie at 4–174 and 183–358; these read PIVA…PPKT and LRVA…AQRQ. Residues 10 to 17, 57 to 61, 126 to 129, 189 to 196, 236 to 240, and 301 to 304 contribute to the GTP site; these read GRPNVGKS, DTAGL, NKCD, DTAGI, and NKWD. In terms of domain architecture, KH-like spans 359 to 444; the sequence is KRIPTSELNN…PIVIVFRSRE (86 aa).

Belongs to the TRAFAC class TrmE-Era-EngA-EngB-Septin-like GTPase superfamily. EngA (Der) GTPase family. As to quaternary structure, associates with the 50S ribosomal subunit.

Functionally, GTPase that plays an essential role in the late steps of ribosome biogenesis. This is GTPase Der from Chloroflexus aggregans (strain MD-66 / DSM 9485).